A 116-amino-acid polypeptide reads, in one-letter code: Flagellar transcriptional regulator FlhD (116 aa).

Belongs to the FlhD family. Homodimer; disulfide-linked. Forms a heterohexamer composed of two FlhC and four FlhD subunits. Each FlhC binds a FlhD dimer, forming a heterotrimer, and a hexamer assembles by dimerization of two heterotrimers.

It is found in the cytoplasm. In terms of biological role, functions in complex with FlhC as a master transcriptional regulator that regulates transcription of several flagellar and non-flagellar operons by binding to their promoter region. Activates expression of class 2 flagellar genes, including fliA, which is a flagellum-specific sigma factor that turns on the class 3 genes. Also regulates genes whose products function in a variety of physiological pathways. The sequence is that of Flagellar transcriptional regulator FlhD from Escherichia coli O9:H4 (strain HS).